A 465-amino-acid chain; its full sequence is UDP-N-acetylmuramate--L-alanine ligase (465 aa).

Glycine 112–threonine 118 serves as a coordination point for ATP.

This sequence belongs to the MurCDEF family.

It localises to the cytoplasm. The enzyme catalyses UDP-N-acetyl-alpha-D-muramate + L-alanine + ATP = UDP-N-acetyl-alpha-D-muramoyl-L-alanine + ADP + phosphate + H(+). Its pathway is cell wall biogenesis; peptidoglycan biosynthesis. Cell wall formation. In Burkholderia mallei (strain NCTC 10247), this protein is UDP-N-acetylmuramate--L-alanine ligase.